Reading from the N-terminus, the 115-residue chain is UPF0738 protein SH1953 (115 aa).

This sequence belongs to the UPF0738 family.

This Staphylococcus haemolyticus (strain JCSC1435) protein is UPF0738 protein SH1953.